A 422-amino-acid chain; its full sequence is Glutamyl-tRNA reductase (422 aa).

Residues Thr49 to Arg52, Ser107, Glu112 to Gln114, and Gln118 contribute to the substrate site. Cys50 functions as the Nucleophile in the catalytic mechanism. Gly187 to Ile192 is a binding site for NADP(+).

The protein belongs to the glutamyl-tRNA reductase family. In terms of assembly, homodimer.

It carries out the reaction (S)-4-amino-5-oxopentanoate + tRNA(Glu) + NADP(+) = L-glutamyl-tRNA(Glu) + NADPH + H(+). It participates in porphyrin-containing compound metabolism; protoporphyrin-IX biosynthesis; 5-aminolevulinate from L-glutamyl-tRNA(Glu): step 1/2. Its function is as follows. Catalyzes the NADPH-dependent reduction of glutamyl-tRNA(Glu) to glutamate 1-semialdehyde (GSA). The chain is Glutamyl-tRNA reductase from Stutzerimonas stutzeri (strain A1501) (Pseudomonas stutzeri).